We begin with the raw amino-acid sequence, 148 residues long: UPF0178 protein Pcar_2632 (148 aa).

Belongs to the UPF0178 family.

The sequence is that of UPF0178 protein Pcar_2632 from Syntrophotalea carbinolica (strain DSM 2380 / NBRC 103641 / GraBd1) (Pelobacter carbinolicus).